A 264-amino-acid polypeptide reads, in one-letter code: Thymidylate synthase (264 aa).

Arg-21 contacts dUMP. His-51 contacts (6R)-5,10-methylene-5,6,7,8-tetrahydrofolate. Arg-126–Arg-127 is a dUMP binding site. The active-site Nucleophile is Cys-146. DUMP contacts are provided by residues Arg-166–Asp-169, Asn-177, and His-207–Tyr-209. Residue Asp-169 coordinates (6R)-5,10-methylene-5,6,7,8-tetrahydrofolate. Ala-263 contacts (6R)-5,10-methylene-5,6,7,8-tetrahydrofolate.

It belongs to the thymidylate synthase family. Bacterial-type ThyA subfamily. Homodimer.

It localises to the cytoplasm. The enzyme catalyses dUMP + (6R)-5,10-methylene-5,6,7,8-tetrahydrofolate = 7,8-dihydrofolate + dTMP. The protein operates within pyrimidine metabolism; dTTP biosynthesis. Catalyzes the reductive methylation of 2'-deoxyuridine-5'-monophosphate (dUMP) to 2'-deoxythymidine-5'-monophosphate (dTMP) while utilizing 5,10-methylenetetrahydrofolate (mTHF) as the methyl donor and reductant in the reaction, yielding dihydrofolate (DHF) as a by-product. This enzymatic reaction provides an intracellular de novo source of dTMP, an essential precursor for DNA biosynthesis. This is Thymidylate synthase from Brevibacillus brevis (strain 47 / JCM 6285 / NBRC 100599).